The primary structure comprises 132 residues: Interleukin-5 (132 aa).

The N-terminal stretch at 1–17 is a signal peptide; the sequence is MRLPLQLSILTLAWVWA. Residues Asn45, Asn74, and Asn88 are each glycosylated (N-linked (GlcNAc...) asparagine).

The protein belongs to the IL-5 family. As to quaternary structure, homodimer; disulfide-linked. Interacts with IL5RA. Interacts with CSF2RB.

The protein localises to the secreted. Homodimeric cytokine expressed predominantly by T-lymphocytes and NK cells that plays an important role in the survival, differentiation, and chemotaxis of eosinophils. Also acts on activated and resting B-cells to induce immunoglobulin production, growth, and differentiation. Mechanistically, exerts its biological effects through a receptor composed of IL5RA subunit and the cytokine receptor common subunit beta/CSF2RB. Binding to the receptor leads to activation of various kinases including LYN, SYK and JAK2 and thereby propagates signals through the RAS-MAPK and JAK-STAT5 pathways respectively. The polypeptide is Interleukin-5 (IL5) (Meriones unguiculatus (Mongolian jird)).